The following is a 2358-amino-acid chain: Cell wall alpha-1,3-glucan synthase mok13 (2358 aa).

Positions 1645-1659 are enriched in basic and acidic residues; the sequence is EGLENEENELKDKAP. A disordered region spans residues 1645–1669; sequence EGLENEENELKDKAPPNEPNVGSLF.

It belongs to the glycosyltransferase group 1 family.

The catalysed reaction is [(1-&gt;3)-alpha-D-glucosyl](n) + UDP-alpha-D-glucose = [(1-&gt;3)-alpha-D-glucosyl](n+1) + UDP + H(+). This is Cell wall alpha-1,3-glucan synthase mok13 (mok13) from Schizosaccharomyces pombe (strain 972 / ATCC 24843) (Fission yeast).